The following is a 462-amino-acid chain: L-seryl-tRNA(Sec) selenium transferase (462 aa).

Lys-292 carries the post-translational modification N6-(pyridoxal phosphate)lysine.

The protein belongs to the SelA family. The cofactor is pyridoxal 5'-phosphate.

Its subcellular location is the cytoplasm. The enzyme catalyses L-seryl-tRNA(Sec) + selenophosphate + H(+) = L-selenocysteinyl-tRNA(Sec) + phosphate. It participates in aminoacyl-tRNA biosynthesis; selenocysteinyl-tRNA(Sec) biosynthesis; selenocysteinyl-tRNA(Sec) from L-seryl-tRNA(Sec) (bacterial route): step 1/1. Functionally, converts seryl-tRNA(Sec) to selenocysteinyl-tRNA(Sec) required for selenoprotein biosynthesis. The polypeptide is L-seryl-tRNA(Sec) selenium transferase (Clostridium perfringens (strain 13 / Type A)).